The sequence spans 417 residues: 4-hydroxy-3-methylbut-2-en-1-yl diphosphate synthase (flavodoxin) (417 aa).

Residues cysteine 304, cysteine 307, cysteine 350, and glutamate 357 each coordinate [4Fe-4S] cluster.

Belongs to the IspG family. [4Fe-4S] cluster is required as a cofactor.

The catalysed reaction is (2E)-4-hydroxy-3-methylbut-2-enyl diphosphate + oxidized [flavodoxin] + H2O + 2 H(+) = 2-C-methyl-D-erythritol 2,4-cyclic diphosphate + reduced [flavodoxin]. It participates in isoprenoid biosynthesis; isopentenyl diphosphate biosynthesis via DXP pathway; isopentenyl diphosphate from 1-deoxy-D-xylulose 5-phosphate: step 5/6. Functionally, converts 2C-methyl-D-erythritol 2,4-cyclodiphosphate (ME-2,4cPP) into 1-hydroxy-2-methyl-2-(E)-butenyl 4-diphosphate. This is 4-hydroxy-3-methylbut-2-en-1-yl diphosphate synthase (flavodoxin) from Sinorhizobium medicae (strain WSM419) (Ensifer medicae).